An 819-amino-acid polypeptide reads, in one-letter code: Ribosome-releasing factor 2, mitochondrial (819 aa).

A mitochondrion-targeting transit peptide spans 1-30 (MWKWNVRRWAGARVNISKNRLSVINVGSRY). Residues 39–327 (SKVRNIGIIA…AIVNYLPSPI (289 aa)) form the tr-type G domain. GTP-binding positions include 48–55 (AHIDAGKT), 113–117 (DTPGH), and 165–168 (NKMD).

The protein belongs to the TRAFAC class translation factor GTPase superfamily. Classic translation factor GTPase family. EF-G/EF-2 subfamily.

The protein resides in the mitochondrion. In terms of biological role, mitochondrial GTPase that mediates the disassembly of ribosomes from messenger RNA at the termination of mitochondrial protein biosynthesis. Not involved in the GTP-dependent ribosomal translocation step during translation elongation. The polypeptide is Ribosome-releasing factor 2, mitochondrial (Saccharomyces cerevisiae (strain RM11-1a) (Baker's yeast)).